The primary structure comprises 566 residues: Transcription factor opdL (566 aa).

A DNA-binding region (zn(2)-C6 fungal-type) is located at residues 15–45 (CATCARAKCRCVPRNGGRGRCERCHHLNKEC).

The protein localises to the nucleus. Functionally, transcription factor; part of the gene cluster that mediates the biosynthesis of oxopyrrolidines, polyketide-amino acid hybrid compounds with feature structures of tetramic acid. The protein is Transcription factor opdL of Penicillium oxalicum (strain 114-2 / CGMCC 5302) (Penicillium decumbens).